A 162-amino-acid polypeptide reads, in one-letter code: Crossover junction endodeoxyribonuclease RuvC (162 aa).

Active-site residues include Asp7, Glu67, and Asp140. Asp7, Glu67, and Asp140 together coordinate Mg(2+).

The protein belongs to the RuvC family. In terms of assembly, homodimer which binds Holliday junction (HJ) DNA. The HJ becomes 2-fold symmetrical on binding to RuvC with unstacked arms; it has a different conformation from HJ DNA in complex with RuvA. In the full resolvosome a probable DNA-RuvA(4)-RuvB(12)-RuvC(2) complex forms which resolves the HJ. The cofactor is Mg(2+).

The protein localises to the cytoplasm. The enzyme catalyses Endonucleolytic cleavage at a junction such as a reciprocal single-stranded crossover between two homologous DNA duplexes (Holliday junction).. Functionally, the RuvA-RuvB-RuvC complex processes Holliday junction (HJ) DNA during genetic recombination and DNA repair. Endonuclease that resolves HJ intermediates. Cleaves cruciform DNA by making single-stranded nicks across the HJ at symmetrical positions within the homologous arms, yielding a 5'-phosphate and a 3'-hydroxyl group; requires a central core of homology in the junction. The consensus cleavage sequence is 5'-(A/T)TT(C/G)-3'. Cleavage occurs on the 3'-side of the TT dinucleotide at the point of strand exchange. HJ branch migration catalyzed by RuvA-RuvB allows RuvC to scan DNA until it finds its consensus sequence, where it cleaves and resolves the cruciform DNA. This Pseudothermotoga lettingae (strain ATCC BAA-301 / DSM 14385 / NBRC 107922 / TMO) (Thermotoga lettingae) protein is Crossover junction endodeoxyribonuclease RuvC.